Here is a 602-residue protein sequence, read N- to C-terminus: Aspartate--tRNA(Asp/Asn) ligase (602 aa).

Glutamate 176 provides a ligand contact to L-aspartate. Positions 200–203 are aspartate; sequence QQFK. Residues arginine 222 and histidine 452 each contribute to the L-aspartate site. An ATP-binding site is contributed by 222 to 224; the sequence is RDE. Glutamate 490 is an ATP binding site. Residue arginine 497 participates in L-aspartate binding. ATP is bound at residue 542 to 545; the sequence is GIDR.

This sequence belongs to the class-II aminoacyl-tRNA synthetase family. Type 1 subfamily. In terms of assembly, homodimer.

Its subcellular location is the cytoplasm. The catalysed reaction is tRNA(Asx) + L-aspartate + ATP = L-aspartyl-tRNA(Asx) + AMP + diphosphate. In terms of biological role, aspartyl-tRNA synthetase with relaxed tRNA specificity since it is able to aspartylate not only its cognate tRNA(Asp) but also tRNA(Asn). Reaction proceeds in two steps: L-aspartate is first activated by ATP to form Asp-AMP and then transferred to the acceptor end of tRNA(Asp/Asn). This Rickettsia africae (strain ESF-5) protein is Aspartate--tRNA(Asp/Asn) ligase.